A 979-amino-acid chain; its full sequence is Mast/stem cell growth factor receptor Kit (979 aa).

The signal sequence occupies residues 1 to 27 (MRGARGAWDFLCVLLLLLLLGVQTGSS). At 28-527 (QPSVSPGEPS…QIHPHTLFTP (500 aa)) the chain is on the extracellular side. Ig-like C2-type domains follow at residues 29–114 (PSVS…VFVR), 123–207 (DLPL…LKVR), 214–311 (PVVS…LEVV), 320–413 (PMMS…VYVN), and 416–510 (PEIL…FNFA). Cysteines 60 and 99 form a disulfide. Asparagine 96, asparagine 132, and asparagine 147 each carry an N-linked (GlcNAc...) asparagine glycan. Intrachain disulfides connect cysteine 138–cysteine 188, cysteine 153–cysteine 185, and cysteine 235–cysteine 293. Asparagine 286, asparagine 296, asparagine 303, asparagine 355, asparagine 370, asparagine 403, asparagine 466, and asparagine 489 each carry an N-linked (GlcNAc...) asparagine glycan. An intrachain disulfide couples cysteine 431 to cysteine 494. The chain crosses the membrane as a helical span at residues 528–548 (LLIGFVIAAGMMCIIVMILTY). At 549–979 (KYLQKPMYEV…TQPLLVHEDV (431 aa)) the chain is on the cytoplasmic side. Tyrosine 550, tyrosine 556, tyrosine 571, and tyrosine 573 each carry phosphotyrosine; by autocatalysis. Tyrosine 571 serves as a coordination point for Mg(2+). The segment at 571 to 573 (YVY) is important for interaction with phosphotyrosine-binding proteins. One can recognise a Protein kinase domain in the interval 592 to 940 (LSFGKTLGAG…ISDSTNHIYS (349 aa)). ATP-binding positions include 599–606 (GAGAFGKV), lysine 626, and 674–680 (EYCCYGD). Phosphotyrosine; by autocatalysis occurs at positions 706, 724, and 733. Phosphoserine; by PKC/PRKCA occurs at positions 744 and 749. Aspartate 795 functions as the Proton acceptor in the catalytic mechanism. Residue arginine 799 coordinates ATP. Mg(2+)-binding residues include asparagine 800 and aspartate 813. The residue at position 824 (serine 824) is a Phosphoserine. Tyrosine 826 carries the phosphotyrosine; by autocatalysis modification. Serine 894 is modified (phosphoserine). Tyrosine 903 and tyrosine 939 each carry phosphotyrosine; by autocatalysis. Serine 962 carries the phosphoserine modification.

It belongs to the protein kinase superfamily. Tyr protein kinase family. CSF-1/PDGF receptor subfamily. Monomer in the absence of bound KITLG/SCF. Homodimer in the presence of bound KITLG/SCF, forming a heterotetramer with two KITLG/SCF molecules. Interacts (via phosphorylated tyrosine residues) with the adapter proteins GRB2 and GRB7 (via SH2 domain), and SH2B2/APS. Interacts (via C-terminus) with MPDZ (via the tenth PDZ domain). Interacts (via phosphorylated tyrosine residues) with PIK3R1 and PIK3 catalytic subunit. Interacts (via phosphorylated tyrosine) with CRK (isoform Crk-II), FYN, SHC1 and MATK/CHK (via SH2 domain). Interacts with LYN and FES/FPS. Interacts (via phosphorylated tyrosine residues) with the protein phosphatases PTPN6/SHP-1 (via SH2 domain), PTPN11/SHP-2 (via SH2 domain) and PTPRU. Interacts with PLCG1. Interacts with DOK1 and TEC. Interacts with IL1RAP (independent of stimulation with KITLG/SCF). A mast cell-specific KITLG/SCF-induced interleukin-33 signaling complex contains IL1RL1, IL1RAP, KIT and MYD88. Ubiquitinated by SOCS6. KIT is rapidly ubiquitinated after autophosphorylation induced by KITLG/SCF binding, leading to internalization and degradation. Post-translationally, autophosphorylated on tyrosine residues. KITLG/SCF binding promotes autophosphorylation. Phosphorylated tyrosine residues are important for interaction with specific binding partners.

It localises to the cell membrane. It catalyses the reaction L-tyrosyl-[protein] + ATP = O-phospho-L-tyrosyl-[protein] + ADP + H(+). With respect to regulation, present in an inactive conformation in the absence of bound ligand. KITLG/SCF binding leads to dimerization and activation by autophosphorylation on tyrosine residues. Activity is down-regulated by PRKCA-mediated phosphorylation on serine residues. In terms of biological role, tyrosine-protein kinase that acts as a cell-surface receptor for the cytokine KITLG/SCF and plays an essential role in the regulation of cell survival and proliferation, hematopoiesis, stem cell maintenance, gametogenesis, mast cell development, migration and function, and in melanogenesis. In response to KITLG/SCF binding, KIT can activate several signaling pathways. Phosphorylates PIK3R1, PLCG1, SH2B2/APS and CBL. Activates the AKT1 signaling pathway by phosphorylation of PIK3R1, the regulatory subunit of phosphatidylinositol 3-kinase. Activated KIT also transmits signals via GRB2 and activation of RAS, RAF1 and the MAP kinases MAPK1/ERK2 and/or MAPK3/ERK1. Promotes activation of STAT family members STAT1, STAT3, STAT5A and STAT5B. Activation of PLCG1 leads to the production of the cellular signaling molecules diacylglycerol and inositol 1,4,5-trisphosphate. KIT signaling is modulated by protein phosphatases, and by rapid internalization and degradation of the receptor. Activated KIT promotes phosphorylation of the protein phosphatases PTPN6/SHP-1 and PTPRU, and of the transcription factors STAT1, STAT3, STAT5A and STAT5B. Promotes phosphorylation of PIK3R1, CBL, CRK (isoform Crk-II), LYN, MAPK1/ERK2 and/or MAPK3/ERK1, PLCG1, SRC and SHC1. The polypeptide is Mast/stem cell growth factor receptor Kit (KIT) (Canis lupus familiaris (Dog)).